The sequence spans 134 residues: ATP synthase epsilon chain (134 aa).

Over residues 94–104 (AKLAKSRAESH) the composition is skewed to basic and acidic residues. The interval 94–115 (AKLAKSRAESHLEEDDDNTDIN) is disordered.

The protein belongs to the ATPase epsilon chain family. As to quaternary structure, F-type ATPases have 2 components, CF(1) - the catalytic core - and CF(0) - the membrane proton channel. CF(1) has five subunits: alpha(3), beta(3), gamma(1), delta(1), epsilon(1). CF(0) has three main subunits: a, b and c.

The protein resides in the cell membrane. Functionally, produces ATP from ADP in the presence of a proton gradient across the membrane. The chain is ATP synthase epsilon chain from Staphylococcus epidermidis (strain ATCC 35984 / DSM 28319 / BCRC 17069 / CCUG 31568 / BM 3577 / RP62A).